Here is a 226-residue protein sequence, read N- to C-terminus: Lysoplasmalogenase TMEM86B (226 aa).

Residues 1–23 (MDARKEGLPLETLFSDQYPQVRR) are Cytoplasmic-facing. A helical membrane pass occupies residues 24 to 40 (WLAPFILACSLYFLLWI). Topologically, residues 41–46 (PVDQPS) are extracellular. Residues 47–68 (WVSALIKCQPILCLVVFLWAVA) traverse the membrane as a helical segment. Topologically, residues 69 to 74 (PGGSST) are cytoplasmic. A helical membrane pass occupies residues 75-93 (WLLQGALVCSAVGDACLIW). Topologically, residues 94 to 99 (PEAFFY) are extracellular. A helical membrane pass occupies residues 100-117 (GTAAFSVAHLFYLGAFGL). Topologically, residues 118–123 (TPLQPG) are cytoplasmic. A helical transmembrane segment spans residues 124-140 (LLLCTTLASLTYYSFLL). The Extracellular segment spans residues 141–146 (LHLEQG). The helical transmembrane segment at 147–163 (MVLPVMAYGLILNSMLW) threads the bilayer. Residues 164 to 171 (RSLVWGGS) are Cytoplasmic-facing. A helical membrane pass occupies residues 172 to 188 (ASWGAVLFTFSDGVLAW). Topologically, residues 189–199 (DTFVYSLPFAR) are extracellular. The chain crosses the membrane as a helical span at residues 200-218 (LVTMSTYYAAQLLLILSAL). Over 219–226 (RNPGLKTH) the chain is Cytoplasmic.

It belongs to the TMEM86 family. As to quaternary structure, homodimer. In terms of tissue distribution, enriched in liver. Also detected in brain and testis.

It is found in the endoplasmic reticulum membrane. The protein resides in the cytoplasm. It carries out the reaction a 1-O-(1Z-alkenyl)-sn-glycero-3-phosphocholine + H2O = a 2,3-saturated aldehyde + sn-glycerol 3-phosphocholine. It catalyses the reaction a 1-O-(1Z-alkenyl)-sn-glycero-3-phosphoethanolamine + H2O = a 2,3-saturated aldehyde + sn-glycero-3-phosphoethanolamine. Its activity is regulated as follows. Competitively inhibited by lysophosphatidic acid. Functionally, catalyzes the hydrolysis of the vinyl ether bond of choline or ethanolamine lysoplasmalogens, forming fatty aldehyde and glycerophosphocholine or glycerophosphoethanolamine, respectively and is specific for the sn-2-deacylated (lyso) form of plasmalogen. The protein is Lysoplasmalogenase TMEM86B (Tmem86b) of Mus musculus (Mouse).